We begin with the raw amino-acid sequence, 449 residues long: Polyadenylation factor subunit 2 (449 aa).

7 WD repeats span residues Lys-77 to Ile-116, Ala-119 to Leu-158, Ala-161 to Val-200, Gly-203 to Thr-242, Gly-245 to Gln-285, Arg-288 to Thr-328, and Ala-337 to Ala-376. The disordered stretch occupies residues Leu-411–Ile-432. The segment covering Asn-415–Ile-432 has biased composition (polar residues).

It is found in the nucleus. Functionally, required for 3'-end cleavage and polyadenylation of pre-mRNAs. Also involved in chromosome segregation where it has a role in chromosome attachment to the mitotic spindle. This is Polyadenylation factor subunit 2 (PSF2) from Eremothecium gossypii (strain ATCC 10895 / CBS 109.51 / FGSC 9923 / NRRL Y-1056) (Yeast).